A 366-amino-acid chain; its full sequence is Fructose-bisphosphate aldolase 1 (366 aa).

Arg56 and Lys147 together coordinate substrate. Glu189 functions as the Proton acceptor in the catalytic mechanism. Lys231 functions as the Schiff-base intermediate with dihydroxyacetone-P in the catalytic mechanism.

The protein belongs to the class I fructose-bisphosphate aldolase family. As to expression, ubiquitous.

The catalysed reaction is beta-D-fructose 1,6-bisphosphate = D-glyceraldehyde 3-phosphate + dihydroxyacetone phosphate. Its pathway is carbohydrate degradation; glycolysis; D-glyceraldehyde 3-phosphate and glycerone phosphate from D-glucose: step 4/4. Its function is as follows. May be involved in the metabolism of fructose-bisphosphate (beta-D-fructose 1,6-bisphosphate) and of fructose 1-phosphate. This chain is Fructose-bisphosphate aldolase 1 (aldo-1), found in Caenorhabditis elegans.